A 147-amino-acid polypeptide reads, in one-letter code: Spermidine export protein MdtJ (147 aa).

The next 4 helical transmembrane spans lie at 1–21 (MIYW…TLSM), 31–51 (TGHI…SLAV), 54–74 (VALG…ITIF), and 81–101 (ETLS…ILLV). Over residues 105–117 (TRKPKQPNRHRGN) the composition is skewed to basic residues. The interval 105–147 (TRKPKQPNRHRGNRPPSVQGLKTQTTGHHKGVAVESGEHHAAA) is disordered.

Belongs to the drug/metabolite transporter (DMT) superfamily. Small multidrug resistance (SMR) (TC 2.A.7.1) family. MdtJ subfamily. In terms of assembly, forms a complex with MdtI.

It is found in the cell inner membrane. Functionally, catalyzes the excretion of spermidine. This is Spermidine export protein MdtJ from Yersinia pseudotuberculosis serotype O:3 (strain YPIII).